Reading from the N-terminus, the 306-residue chain is Putative HPr kinase/phosphorylase 2 (306 aa).

Catalysis depends on residues histidine 138 and lysine 159. 153–160 contacts ATP; it reads GESGVGKS. Residue serine 160 coordinates Mg(2+). Aspartate 177 serves as the catalytic Proton acceptor; for phosphorylation activity. Proton donor; for dephosphorylation activity. Positions 201-210 are important for the catalytic mechanism of both phosphorylation and dephosphorylation; it reads LALRSVGLLN. An important for the catalytic mechanism of dephosphorylation region spans residues 264-269; sequence QLQPGR.

This sequence belongs to the HPrK/P family. As to quaternary structure, homohexamer. Mg(2+) serves as cofactor.

It carries out the reaction [HPr protein]-L-serine + ATP = [HPr protein]-O-phospho-L-serine + ADP + H(+). It catalyses the reaction [HPr protein]-O-phospho-L-serine + phosphate + H(+) = [HPr protein]-L-serine + diphosphate. In terms of biological role, catalyzes the ATP- as well as the pyrophosphate-dependent phosphorylation of a specific serine residue in HPr, a phosphocarrier protein of the phosphoenolpyruvate-dependent sugar phosphotransferase system (PTS). HprK/P also catalyzes the pyrophosphate-producing, inorganic phosphate-dependent dephosphorylation (phosphorolysis) of seryl-phosphorylated HPr (P-Ser-HPr). The two antagonistic activities of HprK/P are regulated by several intracellular metabolites, which change their concentration in response to the absence or presence of rapidly metabolisable carbon sources (glucose, fructose, etc.) in the growth medium. Also phosphorylates/dephosphorylates the HPr-like catabolite repression protein crh on a specific serine residue. Therefore, by controlling the phosphorylation state of HPr and crh, HPrK/P is a sensor enzyme that plays a major role in the regulation of carbon metabolism and sugar transport: it mediates carbon catabolite repression (CCR), and regulates PTS-catalyzed carbohydrate uptake and inducer exclusion. The chain is Putative HPr kinase/phosphorylase 2 (hprK2) from Oceanobacillus iheyensis (strain DSM 14371 / CIP 107618 / JCM 11309 / KCTC 3954 / HTE831).